A 406-amino-acid polypeptide reads, in one-letter code: 4-hydroxy-3-methylbut-2-en-1-yl diphosphate synthase (ferredoxin) (406 aa).

4 residues coordinate [4Fe-4S] cluster: Cys-315, Cys-318, Cys-349, and Glu-356.

It belongs to the IspG family. [4Fe-4S] cluster serves as cofactor.

The enzyme catalyses (2E)-4-hydroxy-3-methylbut-2-enyl diphosphate + 2 oxidized [2Fe-2S]-[ferredoxin] + H2O = 2-C-methyl-D-erythritol 2,4-cyclic diphosphate + 2 reduced [2Fe-2S]-[ferredoxin] + H(+). It functions in the pathway isoprenoid biosynthesis; isopentenyl diphosphate biosynthesis via DXP pathway; isopentenyl diphosphate from 1-deoxy-D-xylulose 5-phosphate: step 5/6. Its function is as follows. Converts 2C-methyl-D-erythritol 2,4-cyclodiphosphate (ME-2,4cPP) into 1-hydroxy-2-methyl-2-(E)-butenyl 4-diphosphate. The sequence is that of 4-hydroxy-3-methylbut-2-en-1-yl diphosphate synthase (ferredoxin) from Rippkaea orientalis (strain PCC 8801 / RF-1) (Cyanothece sp. (strain PCC 8801)).